Consider the following 247-residue polypeptide: Carboxy-S-adenosyl-L-methionine synthase (247 aa).

S-adenosyl-L-methionine-binding positions include Tyr39, 64-66 (GCS), 89-90 (DN), 117-118 (DI), Asn132, and Arg199.

It belongs to the class I-like SAM-binding methyltransferase superfamily. Cx-SAM synthase family. In terms of assembly, homodimer.

The enzyme catalyses prephenate + S-adenosyl-L-methionine = carboxy-S-adenosyl-L-methionine + 3-phenylpyruvate + H2O. Its function is as follows. Catalyzes the conversion of S-adenosyl-L-methionine (SAM) to carboxy-S-adenosyl-L-methionine (Cx-SAM). The polypeptide is Carboxy-S-adenosyl-L-methionine synthase (Salmonella enteritidis PT4 (strain P125109)).